Here is a 623-residue protein sequence, read N- to C-terminus: Chaperone protein HtpG (623 aa).

The segment at 1-328 (MTQEKKKFDA…SEDLPLNISR (328 aa)) is a; substrate-binding. A b region spans residues 329-544 (ESLQHNSILD…ESAMDIRMER (216 aa)). The interval 545–623 (FLIEQKQIAN…DIVQKAILSL (79 aa)) is c.

It belongs to the heat shock protein 90 family. In terms of assembly, homodimer.

The protein resides in the cytoplasm. In terms of biological role, molecular chaperone. Has ATPase activity. This Rickettsia canadensis (strain McKiel) protein is Chaperone protein HtpG.